We begin with the raw amino-acid sequence, 190 residues long: Potassium-transporting ATPase KdpC subunit (190 aa).

The helical transmembrane segment at 9–29 (VMFILFTIICGGIYPSVVTGI) threads the bilayer.

It belongs to the KdpC family. The system is composed of three essential subunits: KdpA, KdpB and KdpC.

It localises to the cell inner membrane. In terms of biological role, part of the high-affinity ATP-driven potassium transport (or Kdp) system, which catalyzes the hydrolysis of ATP coupled with the electrogenic transport of potassium into the cytoplasm. This subunit acts as a catalytic chaperone that increases the ATP-binding affinity of the ATP-hydrolyzing subunit KdpB by the formation of a transient KdpB/KdpC/ATP ternary complex. In Citrifermentans bemidjiense (strain ATCC BAA-1014 / DSM 16622 / JCM 12645 / Bem) (Geobacter bemidjiensis), this protein is Potassium-transporting ATPase KdpC subunit.